A 167-amino-acid polypeptide reads, in one-letter code: Leptin (167 aa).

Positions 1–21 (MHCVPLFCFLWFCHHLYYSQA) are cleaved as a signal peptide. The cysteines at positions 117 and 167 are disulfide-linked.

This sequence belongs to the leptin family.

Its subcellular location is the secreted. In terms of biological role, key player in the regulation of energy balance and body weight control. Once released into the circulation, has central and peripheral effects by binding LEPR, found in many tissues, which results in the activation of several major signaling pathways. In the hypothalamus, acts as an appetite-regulating factor that induces a decrease in food intake and an increase in energy consumption by inducing anorexinogenic factors and suppressing orexigenic neuropeptides, also regulates bone mass and secretion of hypothalamo-pituitary-adrenal hormones. In the periphery, increases basal metabolism, influences reproductive function, regulates pancreatic beta-cell function and insulin secretion, is pro-angiogenic for endothelial cell and affects innate and adaptive immunity. In the arcuate nucleus of the hypothalamus, activates by depolarization POMC neurons inducing FOS and SOCS3 expression to release anorexigenic peptides and inhibits by hyperpolarization NPY neurons inducing SOCS3 with a consequent reduction on release of orexigenic peptides. In addition to its known satiety inducing effect, has a modulatory role in nutrient absorption. In the intestine, reduces glucose absorption by enterocytes by activating PKC and leading to a sequential activation of p38, PI3K and ERK signaling pathways which exerts an inhibitory effect on glucose absorption. Acts as a growth factor on certain tissues, through the activation of different signaling pathways increases expression of genes involved in cell cycle regulation such as CCND1, via JAK2-STAT3 pathway, or VEGFA, via MAPK1/3 and PI3K-AKT1 pathways. May also play an apoptotic role via JAK2-STAT3 pathway and up-regulation of BIRC5 expression. Pro-angiogenic, has mitogenic activity on vascular endothelial cells and plays a role in matrix remodeling by regulating the expression of matrix metalloproteinases (MMPs) and tissue inhibitors of metalloproteinases (TIMPs). In innate immunity, modulates the activity and function of neutrophils by increasing chemotaxis and the secretion of oxygen radicals. Increases phagocytosis by macrophages and enhances secretion of pro-inflammatory mediators. Increases cytotoxic ability of NK cells. Plays a pro-inflammatory role, in synergy with IL1B, by inducing NOS2 which promotes the production of IL6, IL8 and Prostaglandin E2, through a signaling pathway that involves JAK2, PI3K, MAP2K1/MEK1 and MAPK14/p38. In adaptive immunity, promotes the switch of memory T-cells towards T helper-1 cell immune responses. Increases CD4(+)CD25(-) T-cell proliferation and reduces autophagy during TCR (T-cell receptor) stimulation, through MTOR signaling pathway activation and BCL2 up-regulation. The chain is Leptin (LEP) from Sminthopsis crassicaudata (Fat-tailed dunnart).